The sequence spans 376 residues: 23S rRNA (uracil(747)-C(5))-methyltransferase RlmC (376 aa).

4 residues coordinate [4Fe-4S] cluster: C3, C11, C14, and C88. Q213, F242, E263, and N308 together coordinate S-adenosyl-L-methionine. C335 functions as the Nucleophile in the catalytic mechanism.

It belongs to the class I-like SAM-binding methyltransferase superfamily. RNA M5U methyltransferase family. RlmC subfamily.

It catalyses the reaction uridine(747) in 23S rRNA + S-adenosyl-L-methionine = 5-methyluridine(747) in 23S rRNA + S-adenosyl-L-homocysteine + H(+). In terms of biological role, catalyzes the formation of 5-methyl-uridine at position 747 (m5U747) in 23S rRNA. This chain is 23S rRNA (uracil(747)-C(5))-methyltransferase RlmC, found in Vibrio vulnificus (strain YJ016).